The following is a 301-amino-acid chain: Acetylglutamate kinase (301 aa).

Substrate contacts are provided by residues 70–71 (GG), R92, and N185.

This sequence belongs to the acetylglutamate kinase family. ArgB subfamily.

Its subcellular location is the cytoplasm. It carries out the reaction N-acetyl-L-glutamate + ATP = N-acetyl-L-glutamyl 5-phosphate + ADP. It functions in the pathway amino-acid biosynthesis; L-arginine biosynthesis; N(2)-acetyl-L-ornithine from L-glutamate: step 2/4. Its function is as follows. Catalyzes the ATP-dependent phosphorylation of N-acetyl-L-glutamate. The protein is Acetylglutamate kinase of Synechococcus elongatus (strain ATCC 33912 / PCC 7942 / FACHB-805) (Anacystis nidulans R2).